The chain runs to 253 residues: 1-(5-phosphoribosyl)-5-[(5-phosphoribosylamino)methylideneamino] imidazole-4-carboxamide isomerase (253 aa).

The active-site Proton acceptor is the Asp-11. Residue Asp-132 is the Proton donor of the active site.

This sequence belongs to the HisA/HisF family.

It is found in the cytoplasm. The catalysed reaction is 1-(5-phospho-beta-D-ribosyl)-5-[(5-phospho-beta-D-ribosylamino)methylideneamino]imidazole-4-carboxamide = 5-[(5-phospho-1-deoxy-D-ribulos-1-ylimino)methylamino]-1-(5-phospho-beta-D-ribosyl)imidazole-4-carboxamide. The protein operates within amino-acid biosynthesis; L-histidine biosynthesis; L-histidine from 5-phospho-alpha-D-ribose 1-diphosphate: step 4/9. This chain is 1-(5-phosphoribosyl)-5-[(5-phosphoribosylamino)methylideneamino] imidazole-4-carboxamide isomerase, found in Methylobacterium nodulans (strain LMG 21967 / CNCM I-2342 / ORS 2060).